Consider the following 106-residue polypeptide: Small ribosomal subunit protein uS10 (106 aa).

Belongs to the universal ribosomal protein uS10 family. In terms of assembly, part of the 30S ribosomal subunit.

Its function is as follows. Involved in the binding of tRNA to the ribosomes. The polypeptide is Small ribosomal subunit protein uS10 (Archaeoglobus fulgidus (strain ATCC 49558 / DSM 4304 / JCM 9628 / NBRC 100126 / VC-16)).